The primary structure comprises 181 residues: UPF0232 protein SAV_4320 (181 aa).

Polar residues predominate over residues Met-1–Glu-10. 2 disordered regions span residues Met-1–Pro-64 and Gln-156–Gly-181. The segment covering Ala-30–Gly-39 has biased composition (basic and acidic residues).

It belongs to the UPF0232 family.

This is UPF0232 protein SAV_4320 from Streptomyces avermitilis (strain ATCC 31267 / DSM 46492 / JCM 5070 / NBRC 14893 / NCIMB 12804 / NRRL 8165 / MA-4680).